An 892-amino-acid polypeptide reads, in one-letter code: Alpha-actinin-1 (892 aa).

Methionine 1 is modified (N-acetylmethionine). Positions 1 to 247 (MDHYDSQQTN…IMTYVSSFYH (247 aa)) are actin-binding. Position 6 is a phosphoserine (serine 6). Residue tyrosine 12 is modified to Phosphotyrosine; by FAK1. Calponin-homology (CH) domains lie at 31-135 (KQQR…LRFA) and 144-250 (TSAK…HAFS). Residues lysine 95 and lysine 195 each carry the N6-acetyllysine modification. Spectrin repeat units lie at residues 274-384 (QLME…WLLN), 394-499 (HLAE…ALER), 509-620 (QLYL…ALTE), and 630-733 (RLRK…EVEN). The segment at 274–733 (QLMEDYEKLA…IARTINEVEN (460 aa)) is interaction with DDN. Serine 471 bears the Phosphoserine mark. Lysine 676 carries the N6-acetyllysine modification. Phosphoserine is present on serine 677. 2 consecutive EF-hand domains span residues 746-781 (EQMN…LGYD) and 787-822 (QGEA…ETAD). Ca(2+) is bound by residues aspartate 759, aspartate 761, serine 763, threonine 765, and glutamate 770. Residue serine 890 is modified to Phosphoserine.

It belongs to the alpha-actinin family. In terms of assembly, homodimer; antiparallel. Interacts with MYOZ2, TTID and LPP. Interacts with DDN. Interacts with PSD. Interacts with MICALL2. Interacts with DNM2 and CTTN. Interacts with PDLIM1. Interacts with PDLIM2. Interacts with PDLIM4 (via PDZ domain). Interacts with IGSF8.

The protein resides in the cytoplasm. It localises to the cytoskeleton. It is found in the myofibril. Its subcellular location is the sarcomere. The protein localises to the z line. The protein resides in the cell membrane. It localises to the cell junction. It is found in the cell projection. Its subcellular location is the ruffle. F-actin cross-linking protein which is thought to anchor actin to a variety of intracellular structures. Association with IGSF8 regulates the immune synapse formation and is required for efficient T-cell activation. The chain is Alpha-actinin-1 (ACTN1) from Homo sapiens (Human).